The chain runs to 214 residues: Coiled-coil domain-containing protein 169 (214 aa).

Residues serine 56–lysine 138 adopt a coiled-coil conformation. Residues methionine 154–proline 214 are disordered. Polar residues-rich tracts occupy residues threonine 155–arginine 166 and histidine 185–alanine 195.

Belongs to the CCDC169 family.

This chain is Coiled-coil domain-containing protein 169 (Ccdc169), found in Mus musculus (Mouse).